Consider the following 417-residue polypeptide: mRNA export factor ICP27 homolog (417 aa).

The span at 1-28 shows a compositional bias: acidic residues; it reads MEDIIEGGISSDDDFDSSDSSSDEEESD. The tract at residues 1–143 is disordered; the sequence is MEDIIEGGIS…NGPLRNGPPR (143 aa). The tract at residues 64–120 is interaction with RNA; the sequence is RQRSPITWEHQSPLSRVYRSPSPMRFGKRPRISSNSTSRSCKTSWADRVREAAAQRR. Positions 88-94 match the Nuclear localization signal motif; sequence RFGKRPR. Residues 96–107 show a composition bias toward low complexity; the sequence is SSNSTSRSCKTS. The interval 106 to 120 is interaction with host ALYREF or mouse ALYREF2; sequence TSWADRVREAAAQRR. Residues 108–117 show a composition bias toward basic and acidic residues; it reads WADRVREAAA. Positions 118 to 127 match the Nuclear localization signal motif; that stretch reads QRRPSRPFRK. Residues 120–130 show a composition bias toward basic residues; that stretch reads RPSRPFRKPYS. Over residues 132 to 141 the composition is skewed to low complexity; it reads PRNGPLRNGP. Residues Cys-295, His-385, Cys-389, and Cys-394 each coordinate Zn(2+). The segment at 295 to 394 adopts a CHC2-type zinc-finger fold; the sequence is CLMQTTPQDH…HLNKCPSSTC (100 aa).

Belongs to the HHV-1 ICP27 protein family. In terms of assembly, homodimer. Homodimerization is required for transactivation. Interacts with host ALYREF and with mouse ALYREF2. Associates in a complex with RNA, and host export factors NXF1/TAP and ALYREF or ALYREF2; these interactions allow nuclear export of viral transcripts.

It is found in the host cytoplasm. The protein resides in the host nucleus. Probably acts as a viral splicing factor that regulates viral RNA splicing. Functions as a multifunctional regulator of the expression of viral lytic genes. Early protein that promotes the accumulation and nuclear export of viral intronless RNA transcripts by interacting with mRNAs and cellular export proteins. The protein is mRNA export factor ICP27 homolog (EJRF1) of Saimiriine herpesvirus 2 (strain 11) (SaHV-2).